The sequence spans 358 residues: 3-isopropylmalate dehydrogenase (358 aa).

The substrate site is built by arginine 92, arginine 102, arginine 130, and aspartate 224. 3 residues coordinate Mg(2+): aspartate 224, aspartate 248, and aspartate 252. Residue 282–294 (GSAPDIAGQGIAN) participates in NAD(+) binding.

The protein belongs to the isocitrate and isopropylmalate dehydrogenases family. LeuB type 1 subfamily. In terms of assembly, homodimer. It depends on Mg(2+) as a cofactor. The cofactor is Mn(2+).

The protein resides in the cytoplasm. The catalysed reaction is (2R,3S)-3-isopropylmalate + NAD(+) = 4-methyl-2-oxopentanoate + CO2 + NADH. The protein operates within amino-acid biosynthesis; L-leucine biosynthesis; L-leucine from 3-methyl-2-oxobutanoate: step 3/4. In terms of biological role, catalyzes the oxidation of 3-carboxy-2-hydroxy-4-methylpentanoate (3-isopropylmalate) to 3-carboxy-4-methyl-2-oxopentanoate. The product decarboxylates to 4-methyl-2 oxopentanoate. This Bordetella pertussis (strain Tohama I / ATCC BAA-589 / NCTC 13251) protein is 3-isopropylmalate dehydrogenase.